Consider the following 213-residue polypeptide: 5-methylthioribulose-1-phosphate/5-deoxyribulose-1-phosphate aldolase (213 aa).

The Proton donor/acceptor role is filled by E73. Co(2+)-binding residues include E73, H92, H94, and H155.

This sequence belongs to the aldolase class II family. The cofactor is Co(2+).

It carries out the reaction 5-(methylsulfanyl)-D-ribulose 1-phosphate = 2-(methylsulfanyl)acetaldehyde + dihydroxyacetone phosphate. It catalyses the reaction 5-deoxy-D-ribulose 1-phosphate = dihydroxyacetone phosphate + acetaldehyde. Its pathway is amino-acid biosynthesis; L-methionine biosynthesis via salvage pathway. In terms of biological role, uses 5-methylthioribulose-1-phosphate to yield 2-(methylthio)acetaldehyde and dihydroxyacetone phosphate. Can also use 5-deoxyribulose 1-phosphate to yield acetaldehyde and dihydroxyacetone phosphate. Part of a bifunctional DHAP-shunt salvage pathway for SAM by-products. This Escherichia coli O45:K1 (strain S88 / ExPEC) protein is 5-methylthioribulose-1-phosphate/5-deoxyribulose-1-phosphate aldolase.